The chain runs to 478 residues: Putative multidrug resistance outer membrane protein MdtQ (478 aa).

An N-terminal signal peptide occupies residues 1 to 21 (MNRDSFYPAIACFPLLLMLAG). A lipid anchor (N-palmitoyl cysteine) is attached at C22. C22 carries the S-diacylglycerol cysteine lipid modification.

The protein belongs to the outer membrane factor (OMF) (TC 1.B.17) family.

It is found in the cell outer membrane. In terms of biological role, could be involved in resistance to puromycin, acriflavine and tetraphenylarsonium chloride. This is Putative multidrug resistance outer membrane protein MdtQ (mdtQ) from Shigella flexneri.